The sequence spans 257 residues: 5-oxoprolinase subunit A (257 aa).

It belongs to the LamB/PxpA family. In terms of assembly, forms a complex composed of PxpA, PxpB and PxpC.

It catalyses the reaction 5-oxo-L-proline + ATP + 2 H2O = L-glutamate + ADP + phosphate + H(+). Functionally, catalyzes the cleavage of 5-oxoproline to form L-glutamate coupled to the hydrolysis of ATP to ADP and inorganic phosphate. In Bacillus subtilis (strain 168), this protein is 5-oxoprolinase subunit A.